Consider the following 338-residue polypeptide: Glyceraldehyde-3-phosphate dehydrogenase (338 aa).

NAD(+)-binding positions include 12-13 (RI), Asp34, and Arg80. D-glyceraldehyde 3-phosphate-binding positions include 151-153 (SCT), Thr182, 211-212 (TG), and Arg234. The active-site Nucleophile is Cys152. Residue Asn316 participates in NAD(+) binding.

This sequence belongs to the glyceraldehyde-3-phosphate dehydrogenase family. In terms of assembly, homotetramer.

The protein localises to the cytoplasm. The enzyme catalyses D-glyceraldehyde 3-phosphate + phosphate + NAD(+) = (2R)-3-phospho-glyceroyl phosphate + NADH + H(+). It functions in the pathway carbohydrate degradation; glycolysis; pyruvate from D-glyceraldehyde 3-phosphate: step 1/5. This is Glyceraldehyde-3-phosphate dehydrogenase (GPD) from Paracoccidioides lutzii (strain ATCC MYA-826 / Pb01) (Paracoccidioides brasiliensis).